A 374-amino-acid chain; its full sequence is Aminomethyltransferase (374 aa).

Belongs to the GcvT family. As to quaternary structure, the glycine cleavage system is composed of four proteins: P, T, L and H.

It carries out the reaction N(6)-[(R)-S(8)-aminomethyldihydrolipoyl]-L-lysyl-[protein] + (6S)-5,6,7,8-tetrahydrofolate = N(6)-[(R)-dihydrolipoyl]-L-lysyl-[protein] + (6R)-5,10-methylene-5,6,7,8-tetrahydrofolate + NH4(+). In terms of biological role, the glycine cleavage system catalyzes the degradation of glycine. The sequence is that of Aminomethyltransferase from Prochlorococcus marinus (strain MIT 9303).